A 311-amino-acid polypeptide reads, in one-letter code: Coproporphyrin III ferrochelatase 1 (311 aa).

Fe-coproporphyrin III is bound by residues Tyr-12, Arg-29, 45-46 (RY), Ser-53, and Tyr-124. Fe(2+) contacts are provided by His-182 and Glu-263.

Belongs to the ferrochelatase family.

Its subcellular location is the cytoplasm. The catalysed reaction is Fe-coproporphyrin III + 2 H(+) = coproporphyrin III + Fe(2+). It participates in porphyrin-containing compound metabolism; protoheme biosynthesis. In terms of biological role, involved in coproporphyrin-dependent heme b biosynthesis. Catalyzes the insertion of ferrous iron into coproporphyrin III to form Fe-coproporphyrin III. In Bacillus anthracis, this protein is Coproporphyrin III ferrochelatase 1.